The following is a 677-amino-acid chain: MTQVAKQILVTCALPYANGSIHLGHMLEHIQADVWVRYQRMRGHEVNFICADDAHGTPIMLKAQQLGITPEQMIGEMSQEHQTDFAGFNISYDNYHSTHSEENRQLSELIYSRLKENGFIKNRTISQLYDPEKGMFLPDRFVKGTCPKCKSPDQYGDNCEVCGATYSPTELIEPKSVVSGATPVMRDSEHFFFDLPSFSEMLQAWTRSGALQEQVANKMQEWFESGLQQWDISRDAPYFGFEIPNAPGKYFYVWLDAPIGYMGSFKNLCDKRGDSVSFDEYWKKDSTAELYHFIGKDIVYFHSLFWPAMLEGSNFRKPTNLFVHGYVTVNSAKMSKSRGTFIKASTWLNHFDADSLRYYYTAKLSSRIDDIDLNLEDFVQRVNADIVNKVVNLASRNAGFINKRFDGVLASELADPELYKTFTDAAEVIGEAWESREFGKAVREIMALADLANRYVDEQAPWVVAKQEGRDADLQAICSMGINLFRVLMTYLKPVLPKLTERAEAFLNTELTWDGIQQPLLGHKVNPFKALYNRIDMKQVEALVEASKEEVKAAAAPVTGPLADDPIQETITFDDFAKVDLRVALIENAEFVEGSDKLLRLTLDLGGEKRNVFSGIRSAYPDPQALIGRHTIMVANLAPRKMRFGISEGMVMAAGPGGKDIFLLSPDAGAKPGHQVK.

The 'HIGH' region signature appears at 15 to 25; sequence PYANGSIHLGH. Residues Cys-146, Cys-149, Cys-159, and Cys-162 each coordinate Zn(2+). The short motif at 333–337 is the 'KMSKS' region element; the sequence is KMSKS. Lys-336 contributes to the ATP binding site. In terms of domain architecture, tRNA-binding spans 575–677; it reads DFAKVDLRVA…AGAKPGHQVK (103 aa).

The protein belongs to the class-I aminoacyl-tRNA synthetase family. MetG type 1 subfamily. In terms of assembly, homodimer. Zn(2+) serves as cofactor.

The protein localises to the cytoplasm. It catalyses the reaction tRNA(Met) + L-methionine + ATP = L-methionyl-tRNA(Met) + AMP + diphosphate. Its function is as follows. Is required not only for elongation of protein synthesis but also for the initiation of all mRNA translation through initiator tRNA(fMet) aminoacylation. The sequence is that of Methionine--tRNA ligase from Shigella dysenteriae serotype 1 (strain Sd197).